The sequence spans 505 residues: Probable cytochrome P450 28a5 (505 aa).

Cys-450 serves as a coordination point for heme.

The protein belongs to the cytochrome P450 family. The cofactor is heme.

Its subcellular location is the endoplasmic reticulum membrane. It localises to the microsome membrane. Its function is as follows. May be involved in the metabolism of insect hormones and in the breakdown of synthetic insecticides. This Drosophila melanogaster (Fruit fly) protein is Probable cytochrome P450 28a5 (Cyp28a5).